The following is a 174-amino-acid chain: UPF0316 protein LMOf2365_1801 (174 aa).

Helical transmembrane passes span 4–24 (GIFI…IYTV), 36–56 (LAAL…SLVL), and 62–82 (IANV…GMKI).

It belongs to the UPF0316 family.

It is found in the cell membrane. The protein is UPF0316 protein LMOf2365_1801 of Listeria monocytogenes serotype 4b (strain F2365).